Reading from the N-terminus, the 369-residue chain is Ribosomal RNA large subunit methyltransferase M (369 aa).

Residues serine 198, 231 to 234 (APGG), aspartate 250, aspartate 270, and aspartate 287 contribute to the S-adenosyl-L-methionine site. Lysine 316 acts as the Proton acceptor in catalysis.

It belongs to the class I-like SAM-binding methyltransferase superfamily. RNA methyltransferase RlmE family. RlmM subfamily. As to quaternary structure, monomer.

The protein resides in the cytoplasm. The catalysed reaction is cytidine(2498) in 23S rRNA + S-adenosyl-L-methionine = 2'-O-methylcytidine(2498) in 23S rRNA + S-adenosyl-L-homocysteine + H(+). Its function is as follows. Catalyzes the 2'-O-methylation at nucleotide C2498 in 23S rRNA. The protein is Ribosomal RNA large subunit methyltransferase M of Idiomarina loihiensis (strain ATCC BAA-735 / DSM 15497 / L2-TR).